A 147-amino-acid chain; its full sequence is Protein MGF 100-3L (147 aa).

Belongs to the asfivirus MGF 100 family.

Functionally, plays a role in virus cell tropism, and may be required for efficient virus replication in macrophages. In African swine fever virus (isolate Tick/Malawi/Lil 20-1/1983) (ASFV), this protein is Protein MGF 100-3L.